Here is a 350-residue protein sequence, read N- to C-terminus: GTPase Obg (350 aa).

Residues 1–159 (MKLVDEAEIL…RLLKLELKLL (159 aa)) form the Obg domain. One can recognise an OBG-type G domain in the interval 160-337 (ADVGLLGFPN…IMKDVMAFFD (178 aa)). GTP-binding positions include 166–173 (GFPNAGKS), 191–195 (FTTLY), 213–216 (DVPG), 287–290 (NKAD), and 318–320 (SAL). Residues S173 and T193 each coordinate Mg(2+).

This sequence belongs to the TRAFAC class OBG-HflX-like GTPase superfamily. OBG GTPase family. As to quaternary structure, monomer. Mg(2+) serves as cofactor.

The protein resides in the cytoplasm. Its function is as follows. An essential GTPase which binds GTP, GDP and possibly (p)ppGpp with moderate affinity, with high nucleotide exchange rates and a fairly low GTP hydrolysis rate. Plays a role in control of the cell cycle, stress response, ribosome biogenesis and in those bacteria that undergo differentiation, in morphogenesis control. The protein is GTPase Obg of Xanthomonas campestris pv. campestris (strain 8004).